We begin with the raw amino-acid sequence, 80 residues long: Serine protease inhibitor Kazal-type 1 (80 aa).

A signal peptide spans 1-23 (MKVAVIFLLSALALLSLAGNTFS). The Kazal-like domain maps to 27–80 (TGKEASCHDAVAGCPRIYDPVCGTDGITYANECVLCFENRKRIEPVLIRKGGPC). 3 disulfide bridges follow: Cys-33–Cys-62, Cys-40–Cys-59, and Cys-48–Cys-80.

As to expression, in the genital tract, expressed only in male accessory glands including seminal vesicle, coagulating gland and prostate.

It localises to the secreted. Its function is as follows. Serine protease inhibitor which exhibits anti-trypsin activity. In the pancreas, protects against trypsin-catalyzed premature activation of zymogens. In the male reproductive tract, binds to sperm heads where it modulates sperm capacitance by inhibiting calcium uptake and nitrogen oxide (NO) production. The sequence is that of Serine protease inhibitor Kazal-type 1 from Mus musculus (Mouse).